A 147-amino-acid chain; its full sequence is Large ribosomal subunit protein uL15 (147 aa).

Residues 1-57 (MDLSNLSPAPGSTKARKRLGRGPGSGNGTTAGRGNKGHNSRSGGGVRPGFEGGQMPL) are disordered. Gly residues-rich tracts occupy residues 21-31 (RGPGSGNGTTA) and 42-52 (SGGGVRPGFEG).

Belongs to the universal ribosomal protein uL15 family. In terms of assembly, part of the 50S ribosomal subunit.

Its function is as follows. Binds to the 23S rRNA. This is Large ribosomal subunit protein uL15 from Desulfosudis oleivorans (strain DSM 6200 / JCM 39069 / Hxd3) (Desulfococcus oleovorans).